The primary structure comprises 258 residues: Large ribosomal subunit protein bL28m (258 aa).

The transit peptide at 1–21 directs the protein to the mitochondrion; sequence MQKIFRPFQLTRGFTSSVKNF.

The protein belongs to the bacterial ribosomal protein bL28 family. In terms of assembly, component of the mitochondrial large ribosomal subunit (mt-LSU). Mature yeast 74S mitochondrial ribosomes consist of a small (37S) and a large (54S) subunit. The 37S small subunit contains a 15S ribosomal RNA (15S mt-rRNA) and 34 different proteins. The 54S large subunit contains a 21S rRNA (21S mt-rRNA) and 46 different proteins.

The protein resides in the mitochondrion. Functionally, component of the mitochondrial ribosome (mitoribosome), a dedicated translation machinery responsible for the synthesis of mitochondrial genome-encoded proteins, including at least some of the essential transmembrane subunits of the mitochondrial respiratory chain. The mitoribosomes are attached to the mitochondrial inner membrane and translation products are cotranslationally integrated into the membrane. This Saccharomyces cerevisiae (strain ATCC 204508 / S288c) (Baker's yeast) protein is Large ribosomal subunit protein bL28m (MRPL24).